Here is a 579-residue protein sequence, read N- to C-terminus: Nif-specific regulatory protein (579 aa).

Residues aspartate 40–leucine 187 form the GAF domain. One can recognise a Sigma-54 factor interaction domain in the interval isoleucine 226 to alanine 454. Residues glycine 254–glutamate 261 and alanine 317–glutamate 326 each bind ATP. The interval glutamate 464–serine 536 is inter-domain linker. Cysteine 468 and cysteine 473 together coordinate a divalent metal cation. Residues arginine 502–arginine 529 form a disordered region. 7 repeat units span residues alanine 505–proline 506, proline 507–proline 508, glutamate 509–proline 510, alanine 511–proline 512, alanine 513–proline 514, glutamate 515–proline 516, and alanine 517–proline 518. The 7 X 2 AA tandem repeats of X-P stretch occupies residues alanine 505–proline 518. The segment covering alanine 505–alanine 520 has biased composition (pro residues). A C-terminal DNA-binding domain region spans residues arginine 537–isoleucine 579. The H-T-H motif DNA-binding region spans glutamine 551 to glutamine 570.

In terms of assembly, interacts with sigma-54.

Its function is as follows. Required for activation of most nif operons, which are directly involved in nitrogen fixation. This is Nif-specific regulatory protein (nifA1) from Rhodobacter capsulatus (Rhodopseudomonas capsulata).